We begin with the raw amino-acid sequence, 363 residues long: Probable endopolygalacturonase B (363 aa).

The signal sequence occupies residues 1-20 (MQLLQSSVIAATVGAALVAA). Residues 21 to 28 (VPVELEAR) constitute a propeptide that is removed on maturation. Cys-31 and Cys-46 form a disulfide bridge. PbH1 repeat units lie at residues 158–187 (SDNL…DVGS), 188–209 (STYI…AINS), 210–230 (GSHI…SIGS), 239–260 (VEDV…RIKT), 268–290 (VSNV…IVEQ), and 302–347 (TNGI…SITG). Residue Asn-162 is glycosylated (N-linked (GlcNAc...) asparagine). Asp-202 functions as the Proton donor in the catalytic mechanism. Cys-204 and Cys-220 are disulfide-bonded. His-224 is an active-site residue. 2 cysteine pairs are disulfide-bonded: Cys-330-Cys-335 and Cys-354-Cys-363.

Belongs to the glycosyl hydrolase 28 family.

The protein localises to the secreted. It carries out the reaction (1,4-alpha-D-galacturonosyl)n+m + H2O = (1,4-alpha-D-galacturonosyl)n + (1,4-alpha-D-galacturonosyl)m.. Its function is as follows. Involved in maceration and soft-rotting of plant tissue. Hydrolyzes the 1,4-alpha glycosidic bonds of de-esterified pectate in the smooth region of the plant cell wall. The chain is Probable endopolygalacturonase B (pgaB) from Aspergillus flavus (strain ATCC 200026 / FGSC A1120 / IAM 13836 / NRRL 3357 / JCM 12722 / SRRC 167).